The sequence spans 361 residues: Chorismate synthase (361 aa).

NADP(+)-binding residues include R48 and R54. FMN is bound by residues 125–127 (RSS), 238–239 (NA), G278, 293–297 (KPTSS), and R319.

The protein belongs to the chorismate synthase family. Homotetramer. FMNH2 serves as cofactor.

The catalysed reaction is 5-O-(1-carboxyvinyl)-3-phosphoshikimate = chorismate + phosphate. It participates in metabolic intermediate biosynthesis; chorismate biosynthesis; chorismate from D-erythrose 4-phosphate and phosphoenolpyruvate: step 7/7. In terms of biological role, catalyzes the anti-1,4-elimination of the C-3 phosphate and the C-6 proR hydrogen from 5-enolpyruvylshikimate-3-phosphate (EPSP) to yield chorismate, which is the branch point compound that serves as the starting substrate for the three terminal pathways of aromatic amino acid biosynthesis. This reaction introduces a second double bond into the aromatic ring system. The chain is Chorismate synthase from Vibrio parahaemolyticus serotype O3:K6 (strain RIMD 2210633).